The primary structure comprises 647 residues: Threonine--tRNA ligase (647 aa).

The TGS domain maps to 1 to 61 (MIKITFPDGA…EEDGSIEIVT (61 aa)). The catalytic stretch occupies residues 240 to 538 (DHRKLGKELD…LIETYKGAFP (299 aa)). The Zn(2+) site is built by cysteine 334, histidine 385, and histidine 515.

The protein belongs to the class-II aminoacyl-tRNA synthetase family. In terms of assembly, homodimer. The cofactor is Zn(2+).

It localises to the cytoplasm. It catalyses the reaction tRNA(Thr) + L-threonine + ATP = L-threonyl-tRNA(Thr) + AMP + diphosphate + H(+). Its function is as follows. Catalyzes the attachment of threonine to tRNA(Thr) in a two-step reaction: L-threonine is first activated by ATP to form Thr-AMP and then transferred to the acceptor end of tRNA(Thr). Also edits incorrectly charged L-seryl-tRNA(Thr). The sequence is that of Threonine--tRNA ligase from Streptococcus pyogenes serotype M28 (strain MGAS6180).